Consider the following 434-residue polypeptide: F-box/kelch-repeat protein At1g55270 (434 aa).

The 47-residue stretch at 76–122 folds into the F-box domain; it reads PPLLPGLPDDLAVACLIRVPRAEHRKLRLVCKRWYRLASGNFFYSQR. 5 Kelch repeats span residues 129–178, 180–227, 229–276, 278–321, and 325–371; these read EEWV…VLSG, HLYL…VINN, LYVA…VYDK, WFLK…SLNG, and GLDC…LHNK.

The protein is F-box/kelch-repeat protein At1g55270 of Arabidopsis thaliana (Mouse-ear cress).